The primary structure comprises 127 residues: Large ribosomal subunit protein bL12 (127 aa).

Belongs to the bacterial ribosomal protein bL12 family. In terms of assembly, homodimer. Part of the ribosomal stalk of the 50S ribosomal subunit. Forms a multimeric L10(L12)X complex, where L10 forms an elongated spine to which 2 to 4 L12 dimers bind in a sequential fashion. Binds GTP-bound translation factors.

Its function is as follows. Forms part of the ribosomal stalk which helps the ribosome interact with GTP-bound translation factors. Is thus essential for accurate translation. The polypeptide is Large ribosomal subunit protein bL12 (Desulforapulum autotrophicum (strain ATCC 43914 / DSM 3382 / VKM B-1955 / HRM2) (Desulfobacterium autotrophicum)).